Reading from the N-terminus, the 245-residue chain is 1-(5-phosphoribosyl)-5-[(5-phosphoribosylamino)methylideneamino] imidazole-4-carboxamide isomerase (245 aa).

The active-site Proton acceptor is the Asp-8. The Proton donor role is filled by Asp-129.

The protein belongs to the HisA/HisF family.

The protein resides in the cytoplasm. It carries out the reaction 1-(5-phospho-beta-D-ribosyl)-5-[(5-phospho-beta-D-ribosylamino)methylideneamino]imidazole-4-carboxamide = 5-[(5-phospho-1-deoxy-D-ribulos-1-ylimino)methylamino]-1-(5-phospho-beta-D-ribosyl)imidazole-4-carboxamide. It participates in amino-acid biosynthesis; L-histidine biosynthesis; L-histidine from 5-phospho-alpha-D-ribose 1-diphosphate: step 4/9. This chain is 1-(5-phosphoribosyl)-5-[(5-phosphoribosylamino)methylideneamino] imidazole-4-carboxamide isomerase, found in Rhodopseudomonas palustris (strain HaA2).